Here is a 590-residue protein sequence, read N- to C-terminus: 2-hydroxyacyl-CoA lyase (590 aa).

2-hydroxyisobutanoyl-CoA is bound by residues G43, Q128, Q255, 273-274 (RS), and R362. 410–412 (GDL) is a thiamine diphosphate binding site. R417 is a 2-hydroxyisobutanoyl-CoA binding site. Residue G433 coordinates thiamine diphosphate. D460 contributes to the Mg(2+) binding site. Thiamine diphosphate is bound by residues 461–462 (GA) and 487–492 (NRAWNI). Mg(2+) is bound by residues N487 and A489. The active-site Proton acceptor is the E493. 561–564 (DSGK) contributes to the 2-hydroxyisobutanoyl-CoA binding site. The segment at 566–590 (LGFVPDYQALTPWNDAEVARRQEGI) is C-terminal lid.

It belongs to the TPP enzyme family. As to quaternary structure, a homotetramer formed by a dimer of dimers; active sites are located in the dimer interface. Mg(2+) serves as cofactor. Thiamine diphosphate is required as a cofactor.

The enzyme catalyses 2-hydroxyisobutanoyl-CoA = formyl-CoA + acetone. Activity is stimulated by thiamine diphosphate. In terms of biological role, a lyase that reversibly degrades 2-hydroxyisobutyryl-CoA (2-HIB-CoA) to acetone and formyl-CoA. Probably also cleaves 2-hydroxy-2-methylbutyryl-CoA to butanone and formyl-CoA. Does not act on 2-hydroxy-2-ethylbutyryl-CoA. A C-terminal lid closes the active site upon substrate binding, and with residues Leu-127 and Ile-492 restricts the size of the active site cavity so it can only use short-chain (C4 and C5) acyl substrates. Part of a pathway that allows cells to grow on 2-methylpropane-1,2-diol or 2-hydroxyisobutyric acid (2-HIBA) as a sole carbon source. The polypeptide is 2-hydroxyacyl-CoA lyase (Actinomycetospora chiangmaiensis (strain DSM 45062 / JCM 15998 / CCTCC AA 205017 / NBRC 104400 / YIM 0006)).